A 381-amino-acid chain; its full sequence is MKENEVKDEKSVDVLSFKQLEFQKTVLPQDVFRNELTWFCYEIYKSLAFRIWMLLWLPLSVWWKLSSNWIHPLIVSLLVLFLGPFFVLVICGLSRKRSLSKQLIQFCKEITEDTPSSDPHDWEVVAANLNSYFYENKTWNTKYFFFNAMSCQKAFKTTLLEPFSLKKDESAKVKSFKDSVPYIEEALQVYAAGFDKEWKLFNTEKEESPFDLEDIQLPKEAYRFKLTWILKRIFNLRCLPLFLYYFLIVYTSGNADLISRFLFPVVMFFIMTRDFQNMRMIVLSVKMEHKMQFLSTIINEQESGANGWDEIAKKMNRYLFEKKVWNNEEFFYDGLDCEWFFRRFFYRLLSLKKPMWFASLNVELWPYIKEAQSARNEKPLK.

At methionine 1–glutamate 42 the chain is on the extracellular side. A helical transmembrane segment spans residues isoleucine 43–tryptophan 63. Topologically, residues lysine 64–proline 72 are cytoplasmic. The helical transmembrane segment at leucine 73–leucine 93 threads the bilayer. Over serine 94–arginine 237 the chain is Extracellular. A helical transmembrane segment spans residues cysteine 238–isoleucine 258. At serine 259–lysine 381 the chain is on the cytoplasmic side.

Belongs to the DUP/COS family.

The protein localises to the membrane. This chain is Protein COS8 (COS8), found in Saccharomyces cerevisiae (strain ATCC 204508 / S288c) (Baker's yeast).